The sequence spans 680 residues: SH3 domain-binding protein 1 (680 aa).

Basic residues predominate over residues 1–11; sequence MMKRQLHRMRQ. Disordered regions lie at residues 1-24 and 160-184; these read MMKRQLHRMRQLAHTGSSGRTPET and SQAAKNSGSNQGLGGASGSHTHTTT. The tract at residues 1-275 is interaction with CGNL1; it reads MMKRQLHRMR…TAAPFSRVYG (275 aa). Positions 81 to 262 constitute a BAR domain; the sequence is MAESFKELDP…RDNHSQADHS (182 aa). Positions 160–169 are enriched in polar residues; sequence SQAAKNSGSN. Phosphoserine is present on residues S241 and S262. Residues 276 to 469 enclose the Rho-GAP domain; it reads VSLRTHLQDL…ALIQNADTLF (194 aa). An interaction with CD2AP region spans residues 470 to 680; that stretch reads PGDINFNVSG…RPRGLISETE (211 aa). Positions 488–680 are disordered; that stretch reads EKVSSQQVSE…RPRGLISETE (193 aa). A compositionally biased stretch (pro residues) spans 502 to 516; the sequence is VTVPAPATTPAPTPA. S535 is modified (phosphoserine). Residues 536 to 546 are compositionally biased toward polar residues; sequence PKVSRNPTETA. The segment covering 561–571 has biased composition (pro residues); that stretch reads PARPTMPPPQP. A Phosphoserine modification is found at S582. T592 carries the phosphothreonine modification. The SH3-binding motif lies at 607-616; the sequence is APTMPPPLPP. A compositionally biased stretch (pro residues) spans 609-621; it reads TMPPPLPPVPPQP. Phosphoserine is present on S632. Residues 660 to 671 show a composition bias toward pro residues; that stretch reads HPPPPALPPQPR.

As to quaternary structure, interacts with RAC1. Interacts with the exocyst via EXOC4 and EXOC8; required for the localization of both SH3BP1 and the exocyst to the leading edge of migrating cells. Interacts with CD2AP and CGNL1; probably part of a complex at cell junctions. Interacts with CAPZA1; recruits CAPZA1 to forming cell junctions. May interact with AFDN. Interacts with PLXND1; they dissociate upon SEMA3E binding to PLXND1 allowing SH3BP1 to transduce downstream signal through RAC1 inactivation. Interacts with ABL1, GRB2 and SRC (via SH3 domain). As to expression, expressed in all tissues examined. Highest levels found in spleen and brain, lowest in heart and liver.

It is found in the cell projection. The protein resides in the cell junction. Its subcellular location is the tight junction. It localises to the adherens junction. The protein localises to the phagocytic cup. It is found in the nucleus. The protein resides in the cytoplasm. Its subcellular location is the cytosol. In terms of biological role, GTPase activating protein (GAP) which specifically converts GTP-bound Rho-type GTPases including RAC1 and CDC42 in their inactive GDP-bound form. By specifically inactivating RAC1 at the leading edge of migrating cells, it regulates the spatiotemporal organization of cell protrusions which is important for proper cell migration. Also negatively regulates CDC42 in the process of actin remodeling and the formation of epithelial cell junctions. Through its GAP activity toward RAC1 and/or CDC42 plays a specific role in phagocytosis of large particles. Specifically recruited by a PI3 kinase/PI3K-dependent mechanism to sites of large particles engagement, inactivates RAC1 and/or CDC42 allowing the reorganization of the underlying actin cytoskeleton required for engulfment. It also plays a role in angiogenesis and the process of repulsive guidance as part of a semaphorin-plexin signaling pathway. Following the binding of PLXND1 to extracellular SEMA3E it dissociates from PLXND1 and inactivates RAC1, inducing the intracellular reorganization of the actin cytoskeleton and the collapse of cells. This Mus musculus (Mouse) protein is SH3 domain-binding protein 1.